The primary structure comprises 287 residues: MANIVNFTDKQFENRLNDNLEELIQGKKAVESPTAFLLGGQPGSGKTSLRSAIFEETQGNVIVIDNDTFKQQHPNFDELVKLYEKDVVKHVTPYSNRMTEAIISRLSDQGYNLVIEGTGRTTDVPIQTATMLQAKGYETKMYVMAVPKINSYLGTIERYETMYADDPMTARATPKQAHDIVVKNLPTNLETLHKTGLFSDIRLYNREGVKLYSSLETPSISPKETLEKELNRKVSGKEIQPTLERIEQKMVLNKHQETPEFKAIQQKLESLQPPTPPIPKTPKLPGI.

40 to 47 (GQPGSGKT) lines the ATP pocket. Asn-66 lines the substrate pocket. Asp-67 serves as the catalytic Proton acceptor. The substrate site is built by Glu-100, Thr-118, Arg-120, and Thr-128. A disordered region spans residues 267-287 (KLESLQPPTPPIPKTPKLPGI). Residues 273 to 287 (PPTPPIPKTPKLPGI) show a composition bias toward pro residues.

It belongs to the zeta toxin family. As to quaternary structure, in the presence of the epsilon antitoxin forms an inactive PezA(2)PezT(2) heterotetramer. The heterotetramer is still able to bind the UNAG substrate.

It carries out the reaction UDP-N-acetyl-alpha-D-glucosamine + ATP = UDP-N-acetyl-alpha-D-glucosamine 3'-phosphate + ADP + H(+). Its function is as follows. Toxic component of a type II toxin-antitoxin (TA) system. Phosphorylates UDP-N-acetyl-D-glucosamine (UNAG) on the 3'-hydroxyl group of the N-acetyl-D-glucosamine moiety, yielding UNAG-3P. UNAG-3P inhibits MurA, the first committed step in cell wall synthesis, which is then blocked. Phosphorylation is inhibited by cognate epsilon antitoxin. Part of a postsegregational killing (PSK) system involved in the killing of plasmid-free cells. The zeta toxin induces programmed cell death. The protein is Toxin zeta of Streptococcus pyogenes.